Reading from the N-terminus, the 227-residue chain is Phosphoribosylformylglycinamidine synthase subunit PurQ (227 aa).

The Glutamine amidotransferase type-1 domain maps to Lys-2–Asn-226. Cys-86 serves as the catalytic Nucleophile. Residues His-195 and Glu-197 contribute to the active site.

In terms of assembly, part of the FGAM synthase complex composed of 1 PurL, 1 PurQ and 2 PurS subunits.

It localises to the cytoplasm. The catalysed reaction is N(2)-formyl-N(1)-(5-phospho-beta-D-ribosyl)glycinamide + L-glutamine + ATP + H2O = 2-formamido-N(1)-(5-O-phospho-beta-D-ribosyl)acetamidine + L-glutamate + ADP + phosphate + H(+). It carries out the reaction L-glutamine + H2O = L-glutamate + NH4(+). It functions in the pathway purine metabolism; IMP biosynthesis via de novo pathway; 5-amino-1-(5-phospho-D-ribosyl)imidazole from N(2)-formyl-N(1)-(5-phospho-D-ribosyl)glycinamide: step 1/2. Functionally, part of the phosphoribosylformylglycinamidine synthase complex involved in the purines biosynthetic pathway. Catalyzes the ATP-dependent conversion of formylglycinamide ribonucleotide (FGAR) and glutamine to yield formylglycinamidine ribonucleotide (FGAM) and glutamate. The FGAM synthase complex is composed of three subunits. PurQ produces an ammonia molecule by converting glutamine to glutamate. PurL transfers the ammonia molecule to FGAR to form FGAM in an ATP-dependent manner. PurS interacts with PurQ and PurL and is thought to assist in the transfer of the ammonia molecule from PurQ to PurL. The sequence is that of Phosphoribosylformylglycinamidine synthase subunit PurQ from Listeria welshimeri serovar 6b (strain ATCC 35897 / DSM 20650 / CCUG 15529 / CIP 8149 / NCTC 11857 / SLCC 5334 / V8).